The chain runs to 497 residues: 4,4'-diaponeurosporene oxygenase (497 aa).

7–19 (VIGGGLGGISAAI) serves as a coordination point for FAD.

It belongs to the carotenoid/retinoid oxidoreductase family. CrtP subfamily. Requires FAD as cofactor.

It carries out the reaction all-trans-4,4'-diaponeurosporene + 2 AH2 + 2 O2 = 4,4'-diaponeurosporenal + 2 A + 3 H2O. Its pathway is carotenoid biosynthesis; staphyloxanthin biosynthesis; staphyloxanthin from farnesyl diphosphate: step 3/5. Its function is as follows. Involved in the biosynthesis of the yellow-orange carotenoid staphyloxanthin, which plays a role in the virulence via its protective function against oxidative stress. Catalyzes the oxidation of the terminal methyl side group of 4,4'-diaponeurosporene to form 4,4'-diaponeurosporen-4-al. The polypeptide is 4,4'-diaponeurosporene oxygenase (Staphylococcus aureus (strain bovine RF122 / ET3-1)).